The sequence spans 317 residues: tRNA dimethylallyltransferase (317 aa).

Glycine 19–serine 26 lines the ATP pocket. Threonine 21 to serine 26 contributes to the substrate binding site. An interaction with substrate tRNA region spans residues aspartate 44–glutamine 47.

The protein belongs to the IPP transferase family. As to quaternary structure, monomer. The cofactor is Mg(2+).

It catalyses the reaction adenosine(37) in tRNA + dimethylallyl diphosphate = N(6)-dimethylallyladenosine(37) in tRNA + diphosphate. Functionally, catalyzes the transfer of a dimethylallyl group onto the adenine at position 37 in tRNAs that read codons beginning with uridine, leading to the formation of N6-(dimethylallyl)adenosine (i(6)A). This is tRNA dimethylallyltransferase from Methylorubrum extorquens (strain CM4 / NCIMB 13688) (Methylobacterium extorquens).